Here is a 132-residue protein sequence, read N- to C-terminus: ATP synthase epsilon chain (132 aa).

It belongs to the ATPase epsilon chain family. As to quaternary structure, F-type ATPases have 2 components, CF(1) - the catalytic core - and CF(0) - the membrane proton channel. CF(1) has five subunits: alpha(3), beta(3), gamma(1), delta(1), epsilon(1). CF(0) has three main subunits: a, b and c.

It localises to the cell membrane. Functionally, produces ATP from ADP in the presence of a proton gradient across the membrane. The sequence is that of ATP synthase epsilon chain from Desulforamulus reducens (strain ATCC BAA-1160 / DSM 100696 / MI-1) (Desulfotomaculum reducens).